Consider the following 462-residue polypeptide: B3 domain-containing protein REM8 (462 aa).

3 consecutive DNA-binding regions (TF-B3) follow at residues 11-103, 148-243, and 249-346; these read NKHF…LGPS, CFSQ…LCSR, and FVKL…FSKI. The tract at residues 351-419 is disordered; the sequence is FEAEDRRHKR…NLQKTQACSV (69 aa). Residues 369–397 show a composition bias toward basic and acidic residues; the sequence is ETDKGEPSRATKMGPELEKREKTAEKGEP. The span at 399-418 shows a compositional bias: polar residues; that stretch reads RASNKSSGKQGNLQKTQACS.

The protein localises to the nucleus. This Arabidopsis thaliana (Mouse-ear cress) protein is B3 domain-containing protein REM8 (REM8).